Reading from the N-terminus, the 695-residue chain is Elongation factor G (695 aa).

A tr-type G domain is found at 12–286 (DKLRNIGIMA…AVIDYLPSPL (275 aa)). Residues 21-28 (AHIDAGKT), 85-89 (DTPGH), and 139-142 (NKMD) contribute to the GTP site.

The protein belongs to the TRAFAC class translation factor GTPase superfamily. Classic translation factor GTPase family. EF-G/EF-2 subfamily.

It is found in the cytoplasm. In terms of biological role, catalyzes the GTP-dependent ribosomal translocation step during translation elongation. During this step, the ribosome changes from the pre-translocational (PRE) to the post-translocational (POST) state as the newly formed A-site-bound peptidyl-tRNA and P-site-bound deacylated tRNA move to the P and E sites, respectively. Catalyzes the coordinated movement of the two tRNA molecules, the mRNA and conformational changes in the ribosome. This is Elongation factor G from Thermotoga petrophila (strain ATCC BAA-488 / DSM 13995 / JCM 10881 / RKU-1).